A 1013-amino-acid chain; its full sequence is PHD finger protein 20-like protein 1 (1013 aa).

A Tudor 1 domain is found at I11 to P71. Residues K75 and K79 each participate in a glycyl lysine isopeptide (Lys-Gly) (interchain with G-Cter in SUMO2) cross-link. The Tudor 2 domain maps to F85–K141. Disordered stretches follow at residues A183–G206, E309–S368, V389–V454, and V482–P511. Polar residues predominate over residues K315 to K346. Residue S368 is modified to Phosphoserine. Residues P404–Q415 are compositionally biased toward basic residues. S432 is subject to Phosphoserine. A compositionally biased stretch (low complexity) spans S443–S453. The segment covering E496–T505 has biased composition (basic and acidic residues). A Glycyl lysine isopeptide (Lys-Gly) (interchain with G-Cter in SUMO2) cross-link involves residue K530. The segment covering K533–K565 has biased composition (basic and acidic residues). A disordered region spans residues K533–D585. The segment covering P566–K579 has biased composition (basic residues). The PHD-type zinc finger occupies I681–P729. Positions R824–E852 are enriched in basic and acidic residues. The disordered stretch occupies residues R824–E911. A compositionally biased stretch (polar residues) spans Y854–G878. Positions S879–G892 are enriched in acidic residues. At K905 the chain carries N6-acetyllysine.

Interacts with methylated DNMT1 (DNMT1K142me1). Interacts with SOX2.

Its subcellular location is the nucleus. In terms of biological role, is a negative regulator of proteasomal degradation of a set of methylated proteins, including DNMT1 and SOX2. Involved in the maintainance of embryonic stem cells pluripotency, through the regulation of SOX2 levels. This Mus musculus (Mouse) protein is PHD finger protein 20-like protein 1 (Phf20l1).